Consider the following 635-residue polypeptide: PTS system mannitol-specific EIICBA component (635 aa).

The PTS EIIC type-2 domain maps to 12–342 (FGRFLSNMVM…LFKTSKVKER (331 aa)). Helical transmembrane passes span 24–45 (IGAF…WLPN), 50–70 (KLVG…TGGK), 134–155 (SAGI…PAVE), 165–185 (VNFM…EPAK), 273–292 (VILG…GGLV), and 313–334 (FANI…AVLF). Positions 378 to 473 (RKIIVACDAG…RLVAAQRHID (96 aa)) constitute a PTS EIIB type-2 domain. Residue cysteine 384 is the Phosphocysteine intermediate; for EIIB activity of the active site. Cysteine 384 carries the post-translational modification Phosphocysteine; by EIIA. The region spanning 494–635 (FQLGADNIFL…VDEVLALLNK (142 aa)) is the PTS EIIA type-2 domain. Histidine 554 serves as the catalytic Tele-phosphohistidine intermediate; for EIIA activity. Phosphohistidine; by HPr is present on histidine 554.

As to quaternary structure, homodimer. In terms of processing, an intramolecular phosphotransfer takes places between His-554 and Cys-384.

The protein localises to the cell inner membrane. It carries out the reaction D-mannitol(out) + N(pros)-phospho-L-histidyl-[protein] = D-mannitol 1-phosphate(in) + L-histidyl-[protein]. Its function is as follows. The phosphoenolpyruvate-dependent sugar phosphotransferase system (sugar PTS), a major carbohydrate active transport system, catalyzes the phosphorylation of incoming sugar substrates concomitantly with their translocation across the cell membrane. This system is involved in D-mannitol transport. This chain is PTS system mannitol-specific EIICBA component, found in Klebsiella pneumoniae.